Reading from the N-terminus, the 492-residue chain is Catalase isozyme A (492 aa).

The segment at Met-1–Ala-23 is disordered. Over residues Pro-8–Ala-21 the composition is skewed to polar residues. Active-site residues include His-65 and Asn-138. Residue Tyr-348 participates in heme binding.

The protein belongs to the catalase family. In terms of assembly, homotetramer. The cofactor is heme.

Its subcellular location is the peroxisome. It localises to the glyoxysome. The catalysed reaction is 2 H2O2 = O2 + 2 H2O. Functionally, occurs in almost all aerobically respiring organisms and serves to protect cells from the toxic effects of hydrogen peroxide. This chain is Catalase isozyme A, found in Oryza sativa subsp. indica (Rice).